Here is a 124-residue protein sequence, read N- to C-terminus: Acidic protein MsyB (124 aa).

A disordered region spans residues 96–124 (HEWDEGEFQLEPPLDTEEGRAAADEWDER). Over residues 112–124 (EEGRAAADEWDER) the composition is skewed to basic and acidic residues.

In terms of biological role, could participate in the normal pathway of protein export. The sequence is that of Acidic protein MsyB (msyB) from Escherichia coli (strain K12).